The primary structure comprises 288 residues: MAQRVRWERVERVAEAFSRLSIGEVLGFEEQVDPQYKLVSRLAGEIGAGKAALSALLVGLASYRLAMRGEEWWLCFYRHMRSSLPRAEGLRGVLRAVEGFLTSCSGAAIGREAKLRRVRRAASAAEVLGEVLDNPLVLVERPSEVLEALRVALGEKGFRKTTVFSVKIAYYAVRPLAGRKPLTLDVPIPVDVRVACASISSEMVEAPSYREVVARPEAAQRAWGRVARSSGIPVLHIDSILWVTGWAPRELPPGEAREAVAGILSRALDRGKAVLLASELVRRPCPGG.

Residues Gln-35, Ser-62, and Trp-73 each contribute to the 8-oxoguanine site. The tract at residues 134–203 (NPLVLVERPS…VACASISSEM (70 aa)) is helix-hairpin-helix. The active-site Schiff-base intermediate with DNA is Lys-160. The 8-oxoguanine site is built by Phe-164 and Pro-189. Asp-191 is an active-site residue. The 8-oxoguanine site is built by Asp-238 and Trp-242.

Belongs to the archaeal N-glycosylase/DNA lyase (AGOG) family.

The enzyme catalyses 2'-deoxyribonucleotide-(2'-deoxyribose 5'-phosphate)-2'-deoxyribonucleotide-DNA = a 3'-end 2'-deoxyribonucleotide-(2,3-dehydro-2,3-deoxyribose 5'-phosphate)-DNA + a 5'-end 5'-phospho-2'-deoxyribonucleoside-DNA + H(+). In terms of biological role, DNA repair enzyme that is part of the base excision repair (BER) pathway; protects from oxidative damage by removing the major product of DNA oxidation, 8-oxoguanine (GO), from single- and double-stranded DNA substrates. This Aeropyrum pernix (strain ATCC 700893 / DSM 11879 / JCM 9820 / NBRC 100138 / K1) protein is N-glycosylase/DNA lyase.